A 410-amino-acid chain; its full sequence is uncharacterized protein (410 aa).

The next 12 membrane-spanning stretches (helical) occupy residues isoleucine 27–isoleucine 47, serine 63–leucine 83, leucine 97–valine 117, leucine 118–isoleucine 138, asparagine 145–glycine 165, isoleucine 180–leucine 200, valine 228–asparagine 248, leucine 254–leucine 274, asparagine 293–asparagine 313, phenylalanine 316–serine 332, tyrosine 355–phenylalanine 375, and glutamine 378–phenylalanine 398.

This sequence belongs to the major facilitator superfamily.

Its subcellular location is the cell membrane. This is an uncharacterized protein from Buchnera aphidicola subsp. Acyrthosiphon pisum (strain APS) (Acyrthosiphon pisum symbiotic bacterium).